The primary structure comprises 610 residues: Chaperone protein DnaK (610 aa).

Position 173 is a phosphothreonine; by autocatalysis (Thr-173). The span at 579-592 (QQQQAQGANAGQNN) shows a compositional bias: low complexity. The segment at 579 to 610 (QQQQAQGANAGQNNDSTVEDAEFKEVKDDDKK) is disordered. The segment covering 599-610 (AEFKEVKDDDKK) has biased composition (basic and acidic residues).

This sequence belongs to the heat shock protein 70 family.

Acts as a chaperone. In Staphylococcus aureus (strain bovine RF122 / ET3-1), this protein is Chaperone protein DnaK.